The primary structure comprises 754 residues: MAIPFKVLIIGGGVAGLTLAIMLEAYGFDYELLEKHSDVAPKLGAGVGLTPNGARILDQIGVWEMMCERSSPVDSGTALSPEGRTVIFNPNMGEWLQKLFGYKIHFLSRHDCLKILFNKIQQKSRVHLLKEVIKIEAGNLGEKGYVETKDGSIYTGDIIIGADGVRSSVRRELWRIADSESPGYIPKQDKTGIVSFYTAVVGIAYNSGLPEGGSARAYNHHRSYFFQEGREGSGEFYWWLCAKNEKTKEGVIPKLSSEVKEGLLNKYKNDQIGPDLTLGALYKSSIYSTVIPLQEFVLQKCFYKNILLIGDTFRKLHPVAGQGANSAIEESAFVADMLWDLRERGALHDPDSIQKALTEFQTERVVRTTALREDANLVQRMESLDNPVMKFMALKFIPRLNFVIAFLPQLGSSFTPARHLKHLRPPKVGLCPFSQDMKAKPLPRSPLATFSWVTVLILAASSPWLASKYFISGARSFTDDQASQLAEVLELYISILSVSISGMWVIESYKTSSLISPFTSSLPWILASNFWGWQKILPIYICFYILSSQSVVYYYMPQTMTDLGVAKALLPALLVVYTVSAVCTINESGGNTDNSWWFTADFAFPVVAYLSGMFLNATSTMPQAVDVVFSTIDIPYQRRFQNTIAFVGFVAYAALASQYGTTILNEGLNLLNIPAVKNLASLTTVTTLWCLYSAWELRRINATGTSVIRAWLTILSSTIFGGPAATLAGTFIWSKVELAKATSFHPTMQSTDTL.

The helical transmembrane segment at 3–23 (IPFKVLIIGGGVAGLTLAIML) threads the bilayer. The FAD site is built by Glu-34, Gly-48, and Arg-109. The active site involves Tyr-218. Residues Asp-311 and Ala-324 each contribute to the FAD site. Helical transmembrane passes span 446 to 466 (PLAT…PWLA), 486 to 506 (AEVL…MWVI), 536 to 556 (ILPI…YYYM), and 563 to 583 (LGVA…SAVC). N-linked (GlcNAc...) asparagine glycosylation occurs at Asn-586. The chain crosses the membrane as a helical span at residues 595-615 (SWWFTADFAFPVVAYLSGMFL). Asn-616 is a glycosylation site (N-linked (GlcNAc...) asparagine). The next 2 helical transmembrane spans lie at 644–664 (IAFV…TTIL) and 679–697 (LASL…AWEL). An N-linked (GlcNAc...) asparagine glycan is attached at Asn-701. The chain crosses the membrane as a helical span at residues 712–732 (LTILSSTIFGGPAATLAGTFI).

This sequence belongs to the paxM FAD-dependent monooxygenase family. The cofactor is FAD.

The protein localises to the membrane. The protein operates within secondary metabolite biosynthesis; terpenoid biosynthesis. Functionally, FAD-dependent monooxygenase; part of the gene cluster that mediates the biosynthesis of the meroterpenoids nectripenoids A and B, as well as cochliquninone D and isocochliquninone E. The pathway probably begins with the HR-PKS ntnH that catalyzes two chain-extension steps to form a reduced triketide, which then primes the SAT domain in the NR-PKS ntnG to initiate three more cycles of extension to give a linear hexaketide corresponding to the polyketide part of nectripenoids. The FAD-dependent monooxygenase ntnJ then performs an oxidative decarboxylation at C11 of the ntnH/ntnG product, via an electrophilic aromatic hydroxylation with concomitant ipso-decarboxylation. The membrane-bound polyprenyl transferase ntnF then introduces a farnesyl group before the FAD-dependent monooxygenase ntnK functions as the first epoxidase on terminal C12'-C13' olefin, followed by a second epoxidation on C7'-C8' catalyzed by ntnA. The terpene cyclase/mutase ntnI then initiates the sequential tricyclic ring formation through protonation of the terminal epoxide and catalyzes the regioselective and stereoselective 6/6/6-tricyclic ring formation. The cytochrome P450 monooxygenase ntnM may then hydroxylate C1'. In Nectria sp, this protein is FAD-dependent monooxygenase ntnA.